Reading from the N-terminus, the 1228-residue chain is AT-rich interactive domain-containing protein 4B (1228 aa).

Disordered regions lie at residues 123-167 (LPLT…DDRK) and 266-307 (KTEL…PFPE). A phosphoserine mark is found at S276, S295, and S296. A compositionally biased stretch (acidic residues) spans 277–305 (EAEEEEEEEDDEKEKEDNSSEEEEEIEPF). Residues 306–398 (PEERENFLQQ…YLYGFEEYCR (93 aa)) enclose the ARID domain. Residues K428 and K461 each participate in a glycyl lysine isopeptide (Lys-Gly) (interchain with G-Cter in SUMO2) cross-link. A compositionally biased stretch (basic and acidic residues) spans 437–464 (EVNVEDSKNMIPKEETPAEDESERKENI). Disordered stretches follow at residues 437-466 (EVNV…NIKP), 479-525 (PAQS…EQAR), 539-606 (RPAD…SDTG), 620-802 (LQAS…EEKR), 825-1129 (LNNS…RLPK), and 1168-1204 (SEVA…SITA). S482 is subject to Phosphoserine. The segment covering 483–511 (DQEKEANITKLEEKESLEDKDGATARAEE) has biased composition (basic and acidic residues). Positions 546–555 (PKIKHRKKIK) are enriched in basic residues. Positions 556–569 (NKLDKEKDRDEKYS) are enriched in basic and acidic residues. S579, S581, and S588 each carry phosphoserine. Positions 596 to 606 (DLADAKNSDTG) are enriched in basic and acidic residues. Residue S630 is modified to Phosphoserine. 2 stretches are compositionally biased toward basic and acidic residues: residues 635–667 (ERCA…KEEL) and 691–700 (SPERLRKDVE). Residue K664 forms a Glycyl lysine isopeptide (Lys-Gly) (interchain with G-Cter in SUMO2) linkage. A phosphoserine mark is found at S691 and S703. The segment covering 701–713 (AISEDTDFEEEDE) has biased composition (acidic residues). T706 bears the Phosphothreonine mark. The span at 721–730 (VKKDTTDKAL) shows a compositional bias: basic and acidic residues. Over residues 744–753 (IQTNCLQSGS) the composition is skewed to polar residues. Basic and acidic residues-rich tracts occupy residues 755–765 (GKKEDRTKSKE), 825–843 (LNNS…RKDV), and 911–926 (KPVE…RKTE). Positions 927–937 (FPSSGSNSVLN) are enriched in polar residues. At S930 the chain carries Phosphoserine. Residue T942 is modified to Phosphothreonine. A compositionally biased stretch (low complexity) spans 944-965 (ESPSSVTVTETSQQQSSVTVSV). S945 is modified (phosphoserine). Over residues 972–981 (EEVRSIKSET) the composition is skewed to basic and acidic residues. The segment covering 1003–1017 (SSPAGFNASVSSSSS) has biased composition (low complexity). Over residues 1046–1064 (KKQKRSHKATVVNNKKKGK) the composition is skewed to basic residues. A Phosphothreonine modification is found at T1066. Phosphoserine is present on residues S1068, S1069, S1071, and S1075. Positions 1112–1124 (KNGDKDPDLKEPS) are enriched in basic and acidic residues. Residues 1141-1186 (ENMTSAERISILQEKLQEIRKHYLSLKSEVASIDRRRKRLKKKERE) are a coiled coil. The span at 1188-1204 (AATSSSSSSPSSSSITA) shows a compositional bias: low complexity.

In terms of assembly, component of a Sin3A corepressor complex consisting of SIN3A, SAP130, SUDS3/SAP45, SAP180, HDAC1 and HDAC2. Interacts with ARID4A. Interacts with AR.

The protein resides in the nucleus. In terms of biological role, acts as a transcriptional repressor. May function in the assembly and/or enzymatic activity of the Sin3A corepressor complex or in mediating interactions between the complex and other regulatory complexes. Plays a role in the regulation of epigenetic modifications at the PWS/AS imprinting center near the SNRPN promoter, where it might function as part of a complex with RB1 and ARID4A. Involved in spermatogenesis, together with ARID4A, where it functions as a transcriptional coactivator for AR (androgen receptor) and enhances expression of genes required for sperm maturation. Regulates expression of the tight junction protein CLDN3 in the testis, which is important for integrity of the blood-testis barrier. Plays a role in myeloid homeostasis where it regulates the histone methylation state of bone marrow cells and expression of various genes involved in hematopoiesis. May function as a leukemia suppressor. The sequence is that of AT-rich interactive domain-containing protein 4B (Arid4b) from Rattus norvegicus (Rat).